The primary structure comprises 5628 residues: Polyketide synthase ThaG (5628 aa).

Positions 13–448 (HDDIAVIGIA…GTNAHVVLRE (436 aa)) constitute a Ketosynthase family 3 (KS3) 1 domain. Active-site for beta-ketoacyl synthase 1 activity residues include Cys184, His319, and His361. 2 disordered regions span residues 552–613 (GNLV…DGPT) and 1156–1183 (ASPGAASSGAAAPNAASDASRDTERAEA). A compositionally biased stretch (basic and acidic residues) spans 559–589 (GPHDEQADHDGSGEHGEHGERARAGADDLSR). Residues 1156–1173 (ASPGAASSGAAAPNAASD) show a composition bias toward low complexity. Positions 1174-1183 (ASRDTERAEA) are enriched in basic and acidic residues. The Carrier 1 domain maps to 1209-1286 (AHGSARLPAL…RLAGHLATRL (78 aa)). Residue Ser1246 is modified to O-(pantetheine 4'-phosphoryl)serine. The region spanning 1373–1781 (YEPIAIVGMS…GTNAHVIVEA (409 aa)) is the Ketosynthase family 3 (KS3) 2 domain. Residues Cys1529, His1664, and His1704 each act as for beta-ketoacyl synthase 2 activity in the active site. The segment at 1967–2099 (AREPGARERA…GVVDELNEPA (133 aa)) is N-terminal hotdog fold 1. A PKS/mFAS DH 1 domain is found at 1967-2261 (AREPGARERA…SARWRKLAGA (295 aa)). The active-site Proton acceptor; for dehydratase activity 1 is the His1999. A C-terminal hotdog fold 1 region spans residues 2113-2261 (AGERVDGAAL…SARWRKLAGA (149 aa)). The Proton donor; for dehydratase activity 1 role is filled by Asp2175. The tract at residues 2426–2446 (DADEDDRDGREPAGGPPLRDD) is disordered. The 79-residue stretch at 2702–2780 (PAARVDLHAL…AIARALDASA (79 aa)) folds into the Carrier 2 domain. The tract at residues 2817–2836 (TPPDAGAPQRGAHAAAAEGS) is disordered. Residues 2822-2835 (GAPQRGAHAAAAEG) are compositionally biased toward low complexity. In terms of domain architecture, Carrier 3 spans 2862–2935 (ARVGARLSAL…ELTDYFVRRH (74 aa)). Ser2896 carries the O-(pantetheine 4'-phosphoryl)serine modification. The 426-residue stretch at 3005–3430 (ADAIAVIGLA…GANAHVIVRE (426 aa)) folds into the Ketosynthase family 3 (KS3) 3 domain. Catalysis depends on for beta-ketoacyl synthase 3 activity residues Cys3175, His3310, and His3351. Positions 3526–3546 (PGKKQLRGNGRARRGDAPPAG) are disordered. The interval 3621–3743 (HPMLDANRSE…GRSPSRAARG (123 aa)) is N-terminal hotdog fold 2. The region spanning 3621-3895 (HPMLDANRSE…SRAAASWRTA (275 aa)) is the PKS/mFAS DH 2 domain. Residue His3650 is the Proton acceptor; for dehydratase activity 2 of the active site. The tract at residues 3758 to 3895 (RAAPAFDADA…SRAAASWRTA (138 aa)) is C-terminal hotdog fold 2. Asp3818 acts as the Proton donor; for dehydratase activity 2 in catalysis. The segment at 3917–3942 (PAAESPSAATSTSAATSPAISTSAAT) is disordered. The region spanning 4840-4914 (TRTAALLRSL…ALAAYVGSQL (75 aa)) is the Carrier 4 domain. O-(pantetheine 4'-phosphoryl)serine is present on Ser4874. Positions 4960–4992 (APRARTGADAPDTSLASSASSISSARASSPASP) are disordered. In terms of domain architecture, Ketosynthase family 3 (KS3) 4 spans 4998–5424 (SFDVAIVGAS…GVNAHVVLEE (427 aa)). Catalysis depends on for beta-ketoacyl synthase 4 activity residues Cys5158, His5293, and His5339. Positions 5470 to 5544 (ARIEAVIRDA…ALRDHVAERI (75 aa)) constitute a Carrier 5 domain. Residue Ser5504 is modified to O-(pantetheine 4'-phosphoryl)serine. Positions 5573–5603 (VSEATEASDASEASDASEASEASEASEASKA) are disordered.

The cofactor is pantetheine 4'-phosphate.

The protein localises to the cytoplasm. Its pathway is antibiotic biosynthesis. In terms of biological role, involved in production of the polyketide antibiotic thailandamide. This Burkholderia thailandensis (strain ATCC 700388 / DSM 13276 / CCUG 48851 / CIP 106301 / E264) protein is Polyketide synthase ThaG.